The chain runs to 518 residues: DNA-binding protein D-ETS-4 (518 aa).

Disordered regions lie at residues 74–113 and 152–172; these read SQPI…QSSP and LPPS…SCGE. Polar residues predominate over residues 84–94; the sequence is TAPYTNPSSHQ. The segment covering 102–113 has biased composition (low complexity); the sequence is PHSAYPSPQSSP. The segment covering 158–171 has biased composition (polar residues); that stretch reads ESNCETPSPRSSCG. Residues 258–344 form the PNT domain; it reads HAKREADAIC…AQLEIWKMAY (87 aa). Positions 393–426 are disordered; it reads APLNGSTTSPPATNASNGGTATVKRPNGGRTGGG. The span at 396–412 shows a compositional bias: polar residues; it reads NGSTTSPPATNASNGGT. A DNA-binding region (ETS) is located at residues 430 to 513; that stretch reads IHLWQFLKEL…RSQRLVYQFC (84 aa).

The protein belongs to the ETS family. In terms of tissue distribution, transient high expression in pole cells during embryonic stages 8-11.

The protein resides in the nucleus. May have a role in germline development. This is DNA-binding protein D-ETS-4 (Ets98B) from Drosophila melanogaster (Fruit fly).